The following is an 823-amino-acid chain: Dimethyl sulfoxide/trimethylamine N-oxide reductase (823 aa).

Residues 1–42 (MTKFSGNELRAELYRRAFLSYSVAPGALGMFGRSLLAKGARA) constitute a signal peptide (tat-type signal). Mo-bis(molybdopterin guanine dinucleotide)-binding positions include 156–160 (YGWKS), Trp-158, Ser-189, 232–233 (KT), 262–263 (ID), 283–285 (QTD), 364–365 (WS), Arg-368, Asn-476, His-480, 500–501 (HD), Arg-523, Asp-553, 685–686 (HP), 691–693 (HSQ), Asn-779, and 796–797 (GQ).

As to quaternary structure, homodimer. The cofactor is Mo-bis(molybdopterin guanine dinucleotide). In terms of processing, predicted to be exported by the Tat system. The position of the signal peptide cleavage has been experimentally proven.

It is found in the periplasm. The catalysed reaction is dimethyl sulfide + a menaquinone + H2O = dimethyl sulfoxide + a menaquinol. It carries out the reaction trimethylamine + 2 Fe(III)-[cytochrome c] + H2O = trimethylamine N-oxide + 2 Fe(II)-[cytochrome c] + 3 H(+). Functionally, catalyzes the reduction of dimethyl sulfoxide (DMSO) and trimethylamine N-oxide (TMAO) to dimethyl sulfide (DMS) and trimethylamine, respectively. The terminal DMSO reductase can also use various sulfoxides and N-oxide compounds as terminal electron acceptor in addition to DMSO and TMAO. This Rhodobacter capsulatus (Rhodopseudomonas capsulata) protein is Dimethyl sulfoxide/trimethylamine N-oxide reductase (dorA).